A 332-amino-acid chain; its full sequence is Glycerol-3-phosphate dehydrogenase [NAD(P)+] (332 aa).

Residues Ser-11, Phe-12, Lys-32, and Lys-106 each coordinate NADPH. The sn-glycerol 3-phosphate site is built by Lys-106, Gly-137, and Ser-139. NADPH is bound at residue Ala-141. 5 residues coordinate sn-glycerol 3-phosphate: Lys-192, Asp-245, Ser-255, Arg-256, and Asn-257. Lys-192 (proton acceptor) is an active-site residue. Position 256 (Arg-256) interacts with NADPH. Residues Val-280 and Glu-282 each coordinate NADPH.

The protein belongs to the NAD-dependent glycerol-3-phosphate dehydrogenase family.

It localises to the cytoplasm. The catalysed reaction is sn-glycerol 3-phosphate + NAD(+) = dihydroxyacetone phosphate + NADH + H(+). It carries out the reaction sn-glycerol 3-phosphate + NADP(+) = dihydroxyacetone phosphate + NADPH + H(+). Its pathway is membrane lipid metabolism; glycerophospholipid metabolism. Functionally, catalyzes the reduction of the glycolytic intermediate dihydroxyacetone phosphate (DHAP) to sn-glycerol 3-phosphate (G3P), the key precursor for phospholipid synthesis. This chain is Glycerol-3-phosphate dehydrogenase [NAD(P)+], found in Staphylococcus haemolyticus (strain JCSC1435).